Reading from the N-terminus, the 106-residue chain is Nucleoid-associated protein bll8115 (106 aa).

It belongs to the YbaB/EbfC family. As to quaternary structure, homodimer.

It is found in the cytoplasm. The protein localises to the nucleoid. Its function is as follows. Binds to DNA and alters its conformation. May be involved in regulation of gene expression, nucleoid organization and DNA protection. The sequence is that of Nucleoid-associated protein bll8115 from Bradyrhizobium diazoefficiens (strain JCM 10833 / BCRC 13528 / IAM 13628 / NBRC 14792 / USDA 110).